The primary structure comprises 86 residues: Large ribosomal subunit protein bL28 (86 aa).

It belongs to the bacterial ribosomal protein bL28 family.

The polypeptide is Large ribosomal subunit protein bL28 (Phocaeicola vulgatus (strain ATCC 8482 / DSM 1447 / JCM 5826 / CCUG 4940 / NBRC 14291 / NCTC 11154) (Bacteroides vulgatus)).